Reading from the N-terminus, the 318-residue chain is Decaprenyl-phosphate phosphoribosyltransferase (318 aa).

Helical transmembrane passes span tryptophan 33–tyrosine 53 and alanine 59–isoleucine 79. 5-phospho-alpha-D-ribose 1-diphosphate-binding residues include lysine 35 and tyrosine 77. Residues asparagine 80 and aspartate 84 each contribute to the Mg(2+) site. Lysine 94 is a binding site for 5-phospho-alpha-D-ribose 1-diphosphate. Transmembrane regions (helical) follow at residues isoleucine 99–alanine 119 and leucine 121–valine 141. Positions 150 and 167 each coordinate 5-phospho-alpha-D-ribose 1-diphosphate. The next 2 helical transmembrane spans lie at alanine 153 to valine 173 and isoleucine 177 to glycine 197. Lysine 198 is a trans,octa-cis-decaprenyl phosphate binding site. 3 helical membrane-spanning segments follow: residues leucine 225–phenylalanine 245, serine 262–isoleucine 282, and arginine 298–serine 318.

This sequence belongs to the UbiA prenyltransferase family. DPPR synthase subfamily. Mg(2+) is required as a cofactor.

The protein localises to the cell inner membrane. It catalyses the reaction trans,octa-cis-decaprenyl phosphate + 5-phospho-alpha-D-ribose 1-diphosphate + H(+) = trans,octa-cis-decaprenylphospho-beta-D-ribofuranose 5-phosphate + diphosphate. The protein operates within cell wall biogenesis; cell wall polysaccharide biosynthesis. In terms of biological role, involved in the biosynthesis of decaprenylphosphoryl arabinose (DPA) a precursor for arabinan synthesis in mycobacterial cell wall biosynthesis. Catalyzes the transfer of a 5-phosphoribosyl residue from phosphoribose diphosphate (PRPP) to decaprenyl phosphate (DP) to form decaprenylphosphoryl-5-phosphoribose (DPPR). The chain is Decaprenyl-phosphate phosphoribosyltransferase from Mycolicibacterium smegmatis (strain ATCC 700084 / mc(2)155) (Mycobacterium smegmatis).